Reading from the N-terminus, the 118-residue chain is Large ribosomal subunit protein bL20 (118 aa).

This sequence belongs to the bacterial ribosomal protein bL20 family.

In terms of biological role, binds directly to 23S ribosomal RNA and is necessary for the in vitro assembly process of the 50S ribosomal subunit. It is not involved in the protein synthesizing functions of that subunit. This is Large ribosomal subunit protein bL20 from Trichormus variabilis (strain ATCC 29413 / PCC 7937) (Anabaena variabilis).